The primary structure comprises 149 residues: UPF0260 protein Pput_1301 (149 aa).

It belongs to the UPF0260 family.

This is UPF0260 protein Pput_1301 from Pseudomonas putida (strain ATCC 700007 / DSM 6899 / JCM 31910 / BCRC 17059 / LMG 24140 / F1).